Reading from the N-terminus, the 888-residue chain is 3-hydroxy-3-methylglutaryl-coenzyme A reductase (888 aa).

The Cytoplasmic portion of the chain corresponds to 1–9 (MLSRLFRMH). A helical transmembrane segment spans residues 10–39 (GLFVASHPWEVIVGTVTLTICMMSMNMFTG). Topologically, residues 40–56 (NNKICGWNYECPKFEED) are lumenal. The helical transmembrane segment at 57–78 (VLSSDIIILTITRCIAILYIYF) threads the bilayer. An SSD domain is found at 61 to 218 (DIIILTITRC…MTFFPACVSL (158 aa)). Residues 75–78 (YIYF) carry the INSIG-binding motif motif. The Cytoplasmic segment spans residues 79–89 (QFQNLRQLGSK). Lys-89 is covalently cross-linked (Glycyl lysine isopeptide (Lys-Gly) (interchain with G-Cter in ubiquitin)). A helical membrane pass occupies residues 90–114 (YILGIAGLFTIFSSFVFSTVVIHFL). Topologically, residues 115 to 123 (DKELTGLNE) are lumenal. A helical transmembrane segment spans residues 124–149 (ALPFFLLLIDLSRASTLAKFALSSNS). Topologically, residues 150 to 159 (QDEVRENIAR) are cytoplasmic. A helical membrane pass occupies residues 160 to 187 (GMAILGPTFTLDALVECLVIGVGTMSGV). Topologically, residues 188-191 (RQLE) are lumenal. The chain crosses the membrane as a helical span at residues 192 to 220 (IMCCFGCMSVLANYFVFMTFFPACVSLVL). The Cytoplasmic segment spans residues 221 to 248 (ELSRESREGRPIWLLSHFARVLEEEENK). A Glycyl lysine isopeptide (Lys-Gly) (interchain with G-Cter in ubiquitin) cross-link involves residue Lys-248. The chain crosses the membrane as a helical span at residues 249–275 (PNPVTQRVKMIMSLGLVLVHAHSRWIA). Over 276 to 314 (DPSPQNSTADTSKVSLGLDENVSKRIEPSVSLWQFYLSK) the chain is Lumenal. Residues Asn-281 and Asn-296 are each glycosylated (N-linked (GlcNAc...) asparagine). The helical transmembrane segment at 315-339 (MISMDIEQVITLSLALLLAVKYIFF) threads the bilayer. Over 340–888 (EQTETESTLS…LQGACTKKTA (549 aa)) the chain is Cytoplasmic. Catalysis depends on charge relay system residues Glu-559, Lys-691, and Asp-767. The active-site Proton donor is His-866. Position 872 is a phosphoserine; by AMPK (Ser-872).

It belongs to the HMG-CoA reductase family. In terms of assembly, homotetramer. Homodimer. Interacts (via its SSD) with INSIG1; the interaction, accelerated by sterols, leads to the recruitment of HMGCR to AMFR/gp78 for its ubiquitination by the sterol-mediated ERAD pathway. Interacts with UBIAD1. Undergoes sterol-mediated ubiquitination and ER-associated degradation (ERAD). Accumulation of sterols in the endoplasmic reticulum (ER) membrane, triggers binding of the reductase to the ER membrane protein INSIG1 or INSIG2. The INSIG1 binding leads to the recruitment of the ubiquitin ligase, AMFR/gp78, RNF139 or RNF145, initiating ubiquitination of the reductase. The ubiquitinated reductase is then extracted from the ER membrane and delivered to cytosolic 26S proteosomes by a mechanism probably mediated by the ATPase Valosin-containing protein VCP/p97. The INSIG2-binding leads to the recruitment of the ubiquitin ligase RNF139, initiating ubiquitination of the reductase. Lys-248 is the main site of ubiquitination. Ubiquitination is enhanced by the presence of a geranylgeranylated protein. In terms of processing, N-glycosylated. Deglycosylated by NGLY1 on release from the endoplasmic reticulum (ER) in a sterol-mediated manner. Post-translationally, phosphorylated. Phosphorylation at Ser-872 reduces the catalytic activity.

Its subcellular location is the endoplasmic reticulum membrane. The protein localises to the peroxisome membrane. The catalysed reaction is (R)-mevalonate + 2 NADP(+) + CoA = (3S)-3-hydroxy-3-methylglutaryl-CoA + 2 NADPH + 2 H(+). It functions in the pathway metabolic intermediate biosynthesis; (R)-mevalonate biosynthesis; (R)-mevalonate from acetyl-CoA: step 3/3. Regulated by a negative feedback mechanism through sterols and non-sterol metabolites derived from mevalonate. Phosphorylation at Ser-872 down-regulates the catalytic activity. In terms of biological role, catalyzes the conversion of (3S)-hydroxy-3-methylglutaryl-CoA (HMG-CoA) to mevalonic acid, the rate-limiting step in the synthesis of cholesterol and other isoprenoids, thus plays a critical role in cellular cholesterol homeostasis. This is 3-hydroxy-3-methylglutaryl-coenzyme A reductase (HMGCR) from Pongo abelii (Sumatran orangutan).